A 219-amino-acid chain; its full sequence is Cytochrome c oxidase assembly protein CtaG (219 aa).

The segment covering 1–13 (MDATDQGKSTSTT) has biased composition (polar residues). Residues 1 to 24 (MDATDQGKSTSTTAAQAAPGKAAP) form a disordered region. Residues 1-29 (MDATDQGKSTSTTAAQAAPGKAAPRRGIG) lie on the Cytoplasmic side of the membrane. Over residues 14–24 (AAQAAPGKAAP) the composition is skewed to low complexity. The chain crosses the membrane as a helical; Signal-anchor for type II membrane protein span at residues 30–52 (RDALVGGICGAVVVLMIGASYAA). The Periplasmic segment spans residues 53–219 (VPFYNWFCRA…GEPDKPRGSL (167 aa)).

This sequence belongs to the COX11/CtaG family.

The protein localises to the cell inner membrane. Exerts its effect at some terminal stage of cytochrome c oxidase synthesis, probably by being involved in the insertion of the copper B into subunit I. The chain is Cytochrome c oxidase assembly protein CtaG from Bradyrhizobium sp. (strain ORS 278).